A 296-amino-acid polypeptide reads, in one-letter code: Tyrosine recombinase XerC (296 aa).

Residues 2-85 (ADQASWLERF…ALKQFGQFLL (84 aa)) enclose the Core-binding (CB) domain. Residues 106 to 285 (TLPKNLDPDS…DFQHLAKVYD (180 aa)) enclose the Tyr recombinase domain. Catalysis depends on residues R145, K169, H237, R240, and H263. Catalysis depends on Y272, which acts as the O-(3'-phospho-DNA)-tyrosine intermediate.

This sequence belongs to the 'phage' integrase family. XerC subfamily. Forms a cyclic heterotetrameric complex composed of two molecules of XerC and two molecules of XerD.

It is found in the cytoplasm. Functionally, site-specific tyrosine recombinase, which acts by catalyzing the cutting and rejoining of the recombining DNA molecules. The XerC-XerD complex is essential to convert dimers of the bacterial chromosome into monomers to permit their segregation at cell division. It also contributes to the segregational stability of plasmids. In Shewanella amazonensis (strain ATCC BAA-1098 / SB2B), this protein is Tyrosine recombinase XerC.